The chain runs to 1048 residues: Putative truncated guanine nucleotide exchange factor SDC25 (1048 aa).

Disordered stretches follow at residues 208–242 and 419–444; these read SKQG…VSGS and LNLD…DEYE. Residues 212–224 show a composition bias toward low complexity; the sequence is TSCSSETSHHSPS. In terms of domain architecture, N-terminal Ras-GEF spans 578–710; it reads SNNRIKGGSK…LLKEVNQKFK (133 aa). Residues 748–995 enclose the Ras-GEF domain; sequence DPVLFATQLT…YQLSLIIEPK (248 aa). The segment at 997–1048 is disordered; sequence RKKVVPNSNSNNKSQEKSRDDQTDEGKTSTKKDRFPKFQLHKTKKKAPKVSK. A compositionally biased stretch (basic and acidic residues) spans 1010–1032; it reads SQEKSRDDQTDEGKTSTKKDRFP. Residues 1035–1048 show a composition bias toward basic residues; it reads QLHKTKKKAPKVSK.

Promotes the exchange of Ras-bound GDP by GTP. This Saccharomyces cerevisiae (strain ATCC 204508 / S288c) (Baker's yeast) protein is Putative truncated guanine nucleotide exchange factor SDC25 (SDC25).